The sequence spans 263 residues: 3-methyl-2-oxobutanoate hydroxymethyltransferase (263 aa).

2 residues coordinate Mg(2+): D43 and D82. Residues 43 to 44, D82, and K111 each bind 3-methyl-2-oxobutanoate; that span reads DS. Residue E113 participates in Mg(2+) binding. Catalysis depends on E180, which acts as the Proton acceptor.

The protein belongs to the PanB family. Homodecamer; pentamer of dimers. Requires Mg(2+) as cofactor.

It localises to the cytoplasm. The catalysed reaction is 3-methyl-2-oxobutanoate + (6R)-5,10-methylene-5,6,7,8-tetrahydrofolate + H2O = 2-dehydropantoate + (6S)-5,6,7,8-tetrahydrofolate. Its pathway is cofactor biosynthesis; (R)-pantothenate biosynthesis; (R)-pantoate from 3-methyl-2-oxobutanoate: step 1/2. Functionally, catalyzes the reversible reaction in which hydroxymethyl group from 5,10-methylenetetrahydrofolate is transferred onto alpha-ketoisovalerate to form ketopantoate. The chain is 3-methyl-2-oxobutanoate hydroxymethyltransferase from Bdellovibrio bacteriovorus (strain ATCC 15356 / DSM 50701 / NCIMB 9529 / HD100).